We begin with the raw amino-acid sequence, 96 residues long: Large ribosomal subunit protein bL28 (96 aa).

Belongs to the bacterial ribosomal protein bL28 family.

The protein is Large ribosomal subunit protein bL28 of Methylobacterium sp. (strain 4-46).